A 365-amino-acid chain; its full sequence is Iron-sulfur cluster assembly protein SufC (365 aa).

The region spanning 118-364 (LEINDLHAIE…ESDGYAQFVE (247 aa)) is the ABC transporter domain. 152–159 (GRNGSGKS) is a binding site for ATP.

This sequence belongs to the ABC transporter superfamily. Ycf16 family. As to quaternary structure, component of a complex composed of SufB, SufC and SufD in a stoichiometric ratio of 1:2:1. Interacts with SufB. Interacts with SufD; the interaction enhances the ATPase activity of SufC.

Its subcellular location is the plastid. It is found in the apicoplast. The catalysed reaction is ATP + H2O = ADP + phosphate + H(+). It participates in cofactor biosynthesis; iron-sulfur cluster biosynthesis. Functionally, participates in the sulfur mobilization (SUF) pathway for iron-sulfur (Fe-S) cluster biogenesis. As part of a complex consisting of SufB-SufC(2)-SufD, involved in assembly of [4Fe-4S] clusters. Exhibits ATPase activity. The sequence is that of Iron-sulfur cluster assembly protein SufC from Plasmodium berghei (strain Anka).